The sequence spans 198 residues: Superoxide dismutase [Mn], mitochondrial (198 aa).

A Mn(2+)-binding site is contributed by His-26. Tyr-34 bears the 3'-nitrotyrosine mark. N6-acetyllysine; alternate occurs at positions 44 and 51. N6-succinyllysine; alternate is present on residues Lys-44 and Lys-51. His-74 serves as a coordination point for Mn(2+). Residue Lys-90 is modified to N6-acetyllysine. Lys-98 and Lys-106 each carry N6-acetyllysine; alternate. Residues Lys-98 and Lys-106 each carry the N6-succinyllysine; alternate modification. Mn(2+) is bound by residues Asp-159 and His-163. N6-acetyllysine is present on Lys-178.

The protein belongs to the iron/manganese superoxide dismutase family. Homotetramer. The cofactor is Mn(2+). Nitrated under oxidative stress. Nitration coupled with oxidation inhibits the catalytic activity. Post-translationally, acetylation at Lys-98 decreases enzymatic activity. Deacetylated by SIRT3 upon exposure to ionizing radiations or after long fasting. In terms of processing, polyubiquitinated; leading to proteasomal degradation. Deubiquitinated by USP36 which increases protein stability.

It is found in the mitochondrion matrix. It catalyses the reaction 2 superoxide + 2 H(+) = H2O2 + O2. Functionally, destroys superoxide anion radicals which are normally produced within the cells and which are toxic to biological systems. The protein is Superoxide dismutase [Mn], mitochondrial (SOD2) of Macaca fuscata fuscata (Japanese macaque).